A 310-amino-acid chain; its full sequence is Methionyl-tRNA formyltransferase (310 aa).

A (6S)-5,6,7,8-tetrahydrofolate-binding site is contributed by 109–112; that stretch reads SLLP.

This sequence belongs to the Fmt family.

The catalysed reaction is L-methionyl-tRNA(fMet) + (6R)-10-formyltetrahydrofolate = N-formyl-L-methionyl-tRNA(fMet) + (6S)-5,6,7,8-tetrahydrofolate + H(+). Attaches a formyl group to the free amino group of methionyl-tRNA(fMet). The formyl group appears to play a dual role in the initiator identity of N-formylmethionyl-tRNA by promoting its recognition by IF2 and preventing the misappropriation of this tRNA by the elongation apparatus. This Parvibaculum lavamentivorans (strain DS-1 / DSM 13023 / NCIMB 13966) protein is Methionyl-tRNA formyltransferase.